A 355-amino-acid polypeptide reads, in one-letter code: F-box only protein 32 (355 aa).

The short motif at 62–67 (KKRKKD) is the Nuclear localization signal element. Residues 169–173 (LLQTL) carry the Nuclear export signal motif. One can recognise an F-box domain in the interval 223–271 (LTFTDLPLCLQLNIMQRLSDGRDLVSLGQVAPDLHVLSEDRLLWKKLCQ). Positions 280-295 (RKRLILSDKGQLDWKK) match the Bipartite nuclear localization signal motif.

As to quaternary structure, part of the SCF (SKP1-CUL1-F-box) E3 ubiquitin-protein ligase complex SCF(FBXO32) formed of CUL1, SKP1, RBX1 and FBXO32.

It is found in the cytoplasm. The protein localises to the nucleus. The protein operates within protein modification; protein ubiquitination. In terms of biological role, substrate recognition component of a SCF (SKP1-CUL1-F-box protein) E3 ubiquitin-protein ligase complex which mediates the ubiquitination and subsequent proteasomal degradation of target proteins. Probably recognizes and binds to phosphorylated target proteins during skeletal muscle atrophy. Recognizes TERF1. This is F-box only protein 32 (FBXO32) from Bos taurus (Bovine).